The following is a 906-amino-acid chain: Envelope glycoprotein B (906 aa).

Positions 1–31 (MESRIWCLVVCVNLCIVCLGAAVSSSSTSHA) are cleaved as a signal peptide. The span at 29-46 (SHATSSTHNGSHTSRTTS) shows a compositional bias: low complexity. A disordered region spans residues 29 to 51 (SHATSSTHNGSHTSRTTSAQTRS). Residues 32-750 (TSSTHNGSHT…EGVATFLKNP (719 aa)) lie on the Virion surface side of the membrane. Residues Asn-37, Asn-68, Asn-73, and Asn-85 are each glycosylated (N-linked (GlcNAc...) asparagine; by host). 5 cysteine pairs are disulfide-bonded: Cys-94/Cys-550, Cys-111/Cys-506, Cys-185/Cys-250, Cys-246/Cys-250, and Cys-344/Cys-391. The segment at 152-158 (SYAYIYT) is involved in fusion and/or binding to host membrane. The N-linked (GlcNAc...) asparagine; by host glycan is linked to Asn-208. Residues 237–244 (GSTWLYRE) form an involved in fusion and/or binding to host membrane region. N-linked (GlcNAc...) asparagine; by host glycans are attached at residues Asn-281, Asn-286, Asn-302, Asn-341, Asn-383, Asn-405, Asn-409, Asn-417, Asn-447, Asn-452, Asn-464, Asn-465, Asn-554, and Asn-585. Cys-573 and Cys-610 form a disulfide bridge. 2 hydrophobic membrane proximal region regions span residues 696 to 748 (VEDK…TFLK) and 727 to 747 (VAIG…ATFL). The helical transmembrane segment at 751 to 771 (FGAFTIILVAIAVVIITYLIY) threads the bilayer. Residues 772–906 (TRQRRLCTQP…LKDSDEEENV (135 aa)) lie on the Intravirion side of the membrane. Polar residues-rich tracts occupy residues 797 to 809 (VTSG…SLQA) and 859 to 876 (RAQQ…GTQD). Disordered stretches follow at residues 797-837 (VTSG…TAAP) and 856-906 (AEQR…EENV). Residues 877–886 (KGQKPNLLDR) are compositionally biased toward basic and acidic residues. An Internalization motif motif is present at residues 894 to 897 (YRHL).

Belongs to the herpesviridae glycoprotein B family. In terms of assembly, homotrimer; disulfide-linked. Binds to heparan sulfate proteoglycans. Interacts with gH/gL heterodimer. Interacts with host TLR1 and TLR2. Interacts with host C-type lectin CD209/DC-SIGN. Interacts with host ITGB1, EGFR, and PDGFRA. In terms of processing, a proteolytic cleavage by host furin generates two subunits that remain linked by disulfide bonds.

Its subcellular location is the virion membrane. It localises to the host cell membrane. The protein localises to the host endosome membrane. It is found in the host Golgi apparatus membrane. Functionally, envelope glycoprotein that plays a role in host cell entry, cell to-cell virus transmission, and fusion of infected cells. May be involved in the initial attachment via binding to heparan sulfate together with the gM/gN complex that binds heparin with higher affinity. Interacts with host integrin ITGB1, PDGFRA and EGFR that likely serve as postattachment entry receptors. Also participates in the fusion of viral and cellular membranes leading to virus entry into the host cell. Membrane fusion is mediated by the fusion machinery composed at least of gB and the heterodimer gH/gL. In Human cytomegalovirus (strain AD169) (HHV-5), this protein is Envelope glycoprotein B.